Consider the following 418-residue polypeptide: Serine hydroxymethyltransferase (418 aa).

(6S)-5,6,7,8-tetrahydrofolate-binding positions include Leu-117 and 121-123 (GHL). N6-(pyridoxal phosphate)lysine is present on Lys-225.

The protein belongs to the SHMT family. As to quaternary structure, homodimer. Requires pyridoxal 5'-phosphate as cofactor.

The protein resides in the cytoplasm. The catalysed reaction is (6R)-5,10-methylene-5,6,7,8-tetrahydrofolate + glycine + H2O = (6S)-5,6,7,8-tetrahydrofolate + L-serine. Its pathway is one-carbon metabolism; tetrahydrofolate interconversion. The protein operates within amino-acid biosynthesis; glycine biosynthesis; glycine from L-serine: step 1/1. Catalyzes the reversible interconversion of serine and glycine with tetrahydrofolate (THF) serving as the one-carbon carrier. This reaction serves as the major source of one-carbon groups required for the biosynthesis of purines, thymidylate, methionine, and other important biomolecules. Also exhibits THF-independent aldolase activity toward beta-hydroxyamino acids, producing glycine and aldehydes, via a retro-aldol mechanism. The polypeptide is Serine hydroxymethyltransferase (Mycoplasma mobile (strain ATCC 43663 / 163K / NCTC 11711) (Mesomycoplasma mobile)).